The primary structure comprises 228 residues: Uracil-DNA glycosylase (228 aa).

D64 functions as the Proton acceptor in the catalytic mechanism.

Belongs to the uracil-DNA glycosylase (UDG) superfamily. UNG family.

The protein localises to the cytoplasm. It carries out the reaction Hydrolyzes single-stranded DNA or mismatched double-stranded DNA and polynucleotides, releasing free uracil.. In terms of biological role, excises uracil residues from the DNA which can arise as a result of misincorporation of dUMP residues by DNA polymerase or due to deamination of cytosine. This chain is Uracil-DNA glycosylase, found in Pectobacterium carotovorum subsp. carotovorum (strain PC1).